The following is a 248-amino-acid chain: Proteasome subunit alpha (248 aa).

The protein belongs to the peptidase T1A family. The 20S proteasome core is composed of 14 alpha and 14 beta subunits that assemble into four stacked heptameric rings, resulting in a barrel-shaped structure. The two inner rings, each composed of seven catalytic beta subunits, are sandwiched by two outer rings, each composed of seven alpha subunits. The catalytic chamber with the active sites is on the inside of the barrel. Has a gated structure, the ends of the cylinder being occluded by the N-termini of the alpha-subunits. Is capped by the proteasome-associated ATPase, ARC.

It is found in the cytoplasm. It participates in protein degradation; proteasomal Pup-dependent pathway. With respect to regulation, the formation of the proteasomal ATPase ARC-20S proteasome complex, likely via the docking of the C-termini of ARC into the intersubunit pockets in the alpha-rings, may trigger opening of the gate for substrate entry. Interconversion between the open-gate and close-gate conformations leads to a dynamic regulation of the 20S proteasome proteolysis activity. Its function is as follows. Component of the proteasome core, a large protease complex with broad specificity involved in protein degradation. This chain is Proteasome subunit alpha, found in Mycobacterium bovis (strain BCG / Pasteur 1173P2).